The primary structure comprises 219 residues: Deoxyribose-phosphate aldolase (219 aa).

Asp-89 (proton donor/acceptor) is an active-site residue. Lys-151 serves as the catalytic Schiff-base intermediate with acetaldehyde. Lys-180 (proton donor/acceptor) is an active-site residue.

The protein belongs to the DeoC/FbaB aldolase family. DeoC type 1 subfamily.

It is found in the cytoplasm. The enzyme catalyses 2-deoxy-D-ribose 5-phosphate = D-glyceraldehyde 3-phosphate + acetaldehyde. Its pathway is carbohydrate degradation; 2-deoxy-D-ribose 1-phosphate degradation; D-glyceraldehyde 3-phosphate and acetaldehyde from 2-deoxy-alpha-D-ribose 1-phosphate: step 2/2. Catalyzes a reversible aldol reaction between acetaldehyde and D-glyceraldehyde 3-phosphate to generate 2-deoxy-D-ribose 5-phosphate. This Clostridioides difficile (strain 630) (Peptoclostridium difficile) protein is Deoxyribose-phosphate aldolase.